The following is a 512-amino-acid chain: uncharacterized protein (512 aa).

The first 22 residues, 1–22 (MVSSLIYSLCAVSGLLATTVNG), serve as a signal peptide directing secretion. N-linked (GlcNAc...) asparagine glycosylation is present at N167. The tract at residues 251–282 (SAASPPIYEPDRQTDPEDPETGRNNNQGFEGL) is disordered.

The protein localises to the secreted. This is an uncharacterized protein from Arthroderma benhamiae (strain ATCC MYA-4681 / CBS 112371) (Trichophyton mentagrophytes).